Consider the following 485-residue polypeptide: Zinc finger protein 577 (485 aa).

Residues 1–21 form a disordered region; that stretch reads MKNATIVMSVRREQGSSSGEG. The 72-residue stretch at 23-94 folds into the KRAB domain; that stretch reads LSFEDVAVGF…EGAAHSQICP (72 aa). A C2H2-type 1; degenerate zinc finger spans residues 158–180; it reads HECSVCGRAFSRKAQLIQHQRTE. 7 C2H2-type zinc fingers span residues 186 to 208, 214 to 236, 242 to 264, 270 to 292, 298 to 320, 326 to 348, and 354 to 376; these read HGCG…QRTH, HECS…QRTH, YRCS…QRSH, YGCS…QRLH, YKCS…QRIH, YECS…QRTH, and YSCR…EKTH.

Belongs to the krueppel C2H2-type zinc-finger protein family.

It localises to the nucleus. May be involved in transcriptional regulation. The sequence is that of Zinc finger protein 577 (ZNF577) from Homo sapiens (Human).